Consider the following 624-residue polypeptide: Heat shock factor protein 5 (624 aa).

A DNA-binding region spans residues 11-228; sequence NPNNFPAKLW…FHRSFRRDNL (218 aa). 5 disordered regions span residues 52–77, 112–138, 186–214, 429–461, and 572–605; these read LSPP…SGVG, GAAG…HSPH, SASA…HGPV, CPSS…LEPL, and GPAN…DLHL. Gly residues-rich tracts occupy residues 58–77 and 112–127; these read GAGG…SGVG and GAAG…GPAG. Composition is skewed to low complexity over residues 186-197 and 442-457; these read SASASTSPLQHQ and PNAN…QASQ. Position 600 is a phosphoserine (Ser600).

It belongs to the HSF family. In terms of assembly, homooligomer. As to expression, highly expressed in testis particularly in spermatocytes (at protein level). Not expressed in fetal testis and ovary.

It localises to the nucleus. Its subcellular location is the chromosome. In terms of biological role, DNA-binding transcription factor that is essential for male fertility, spermatogenesis and meiotic prophase progression in spermatocytes under non-stress conditions. Positvely and negatively regulates gene expression to ensure progression of meiotic prophase beyond pachytene stage in spermatocytes. Plays a role in male germline meiotic sex chromosome remodeling and silencing through regulation of SMARCA4. This is Heat shock factor protein 5 (Hsf5) from Mus musculus (Mouse).